Consider the following 500-residue polypeptide: DNA double-strand break repair helicase HerA (500 aa).

ATP is bound by residues arginine 142, 151–156 (GSGKSN), and 459–460 (KI).

This sequence belongs to the HerA family. Homohexamer. Forms a complex with NurA.

It catalyses the reaction Couples ATP hydrolysis with the unwinding of duplex DNA at the replication fork by translocating in the 5'-3' direction. This creates two antiparallel DNA single strands (ssDNA). The leading ssDNA polymer is the template for DNA polymerase III holoenzyme which synthesizes a continuous strand.. The catalysed reaction is ATP + H2O = ADP + phosphate + H(+). It carries out the reaction Couples ATP hydrolysis with the unwinding of duplex DNA by translocating in the 3'-5' direction.. ATPase activity is stimulated in the presence of linear double-stranded (ds)DNA. Helicase activity requires the presence of NurA. LhrC-Core (Hel112) inhibits the exonuclease activity of the HerA-NurA complex on ss- and dsDNA, has no effect on the nicking activity of NurA. Its function is as follows. Involved in DNA double-strand break (DSB) repair. Probably acts with NurA to stimulate resection of the 5' strand and produce the long 3' single-strand that is required for RadA loading. NurA and HerA together stimulate the end-resection of six nucleotides of a linear DNA substrate. Has DNA-dependent ATPase activity and bidirectional DNA helicase activity. Preferentially binds single stranded (ss)DNA, bubble and semiforked DNA substrate over other DNA molecules tested. Stimulates the exo- but not endonuclease activity of NurA. This Saccharolobus solfataricus (strain ATCC 35092 / DSM 1617 / JCM 11322 / P2) (Sulfolobus solfataricus) protein is DNA double-strand break repair helicase HerA.